The primary structure comprises 1097 residues: RecBCD enzyme subunit RecC (1097 aa).

Belongs to the RecC family. Heterotrimer of RecB, RecC and RecD. All subunits contribute to DNA-binding.

Functionally, a helicase/nuclease that prepares dsDNA breaks (DSB) for recombinational DNA repair. Binds to DSBs and unwinds DNA via a highly rapid and processive ATP-dependent bidirectional helicase activity. Holoenzyme degrades any linearized DNA that is unable to undergo homologous recombination. In the holoenzyme this subunit recognizes the wild-type Chi sequence, and when added to isolated RecB increases its ATP-dependent helicase processivity. Unlike the case in E.coli, suppresses RecA-dependent homologous recombination, is instead required for single-strand annealing pathway repair of DSB. The chain is RecBCD enzyme subunit RecC from Mycobacterium tuberculosis (strain CDC 1551 / Oshkosh).